The chain runs to 630 residues: Polyphenol oxidase A, chloroplastic (630 aa).

The segment at 1–25 (MASLCSNSSSTSLKTPFTSSTTCLS) is disordered. A chloroplast-targeting transit peptide spans 1–87 (MASLCSNSSS…ANAIPLAASA (87 aa)). Disulfide bonds link Cys-98–Cys-114 and Cys-113–Cys-181. Residues His-180, His-198, His-207, His-328, His-332, and His-370 each coordinate Cu cation. A cross-link (2'-(S-cysteinyl)-histidine (Cys-His)) is located at residues 184–198 (CNGGYSIDGKVLQVH).

The protein belongs to the tyrosinase family. It depends on Cu(2+) as a cofactor.

The protein localises to the plastid. It localises to the chloroplast thylakoid lumen. It carries out the reaction 2 catechol + O2 = 2 1,2-benzoquinone + 2 H2O. Functionally, catalyzes the oxidation of mono- and o-diphenols to o-diquinones. The protein is Polyphenol oxidase A, chloroplastic of Solanum lycopersicum (Tomato).